Consider the following 493-residue polypeptide: NAD(P)H dehydrogenase (quinone) (493 aa).

Residues 12–13, 35–37, 42–43, Lys-52, Gly-117, Asp-317, 324–325, and Tyr-450 each bind FAD; these read PA, DCD, AA, and LA.

It belongs to the class-I pyridine nucleotide-disulfide oxidoreductase family. As to quaternary structure, homotetramer. It depends on FAD as a cofactor.

It catalyses the reaction a quinone + NADH + H(+) = a quinol + NAD(+). It carries out the reaction a quinone + NADPH + H(+) = a quinol + NADP(+). Functionally, may contribute to virulence by increasing resistance to reactive oxygen intermediates. It can reduce 2,6-dimethyl-1,4-benzoquinone (DMBQ), 5-hydroxy-1,4-naphthaquinone (5-HNQ) and menadione. The polypeptide is NAD(P)H dehydrogenase (quinone) (lpdA) (Mycobacterium tuberculosis (strain CDC 1551 / Oshkosh)).